Reading from the N-terminus, the 640-residue chain is MSERKEGRGKGKGKKKERGSGKKPESAAGSQSPALPPRLKEMKSQESAAGSKLVLRCETSSEYSSLRFKWFKNGNELNRKNKPQNIKIQKKPGKSELRINKASLADSGEYMCKVISKLGNDSASANITIVESNEIITGMPASTEGAYVSSESPIRISVSTEGANTSSSTSTSTTGTSHLVKCAEKEKTFCVNGGECFMVKDLSNPSRYLCKCQPGFTGARCTENVPMKVQNQEKAEELYQKRVLTITGICIALLVVGIMCVVAYCKTKKQRKKLHDRLRQSLRSERNNMMNIANGPHHPNPPPENVQLVNQYVSKNVISSEHIVEREAETSFSTSHYTSTAHHSTTVTQTPSHSWSNGHTESILSESHSVIVMSSVENSRHSSPTGGPRGRLNGTGGPRECNSFLRHARETPDSYRDSPHSERYVSAMTTPARMSPVDFHTPSSPKSPPSEMSPPVSSMTVSMPSMAVSPFMEEERPLLLVTPPRLREKKFDHHPQQFSSFHHNPAHDSNSLPASPLRIVEDEEYETTQEYEPAQEPVKKLANSRRAKRTKPNGHIANRLEVDSNTSSQSSNSESETEDERVGEDTPFLGIQNPLAASLEATPAFRLADSRTNPAGRFSTQEEIQARLSSVIANQDPIAV.

Positions 1–19 (MSERKEGRGKGKGKKKERG) are excised as a propeptide. The disordered stretch occupies residues 1–53 (MSERKEGRGKGKGKKKERGSGKKPESAAGSQSPALPPRLKEMKSQESAAGSKL). Residues 20–242 (SGKKPESAAG…EKAEELYQKR (223 aa)) are Extracellular-facing. An Ig-like C2-type domain is found at 37 to 128 (PRLKEMKSQE…GNDSASANIT (92 aa)). C57 and C112 form a disulfide bridge. N-linked (GlcNAc...) asparagine glycosylation is found at N120, N126, and N164. One can recognise an EGF-like domain in the interval 178-222 (HLVKCAEKEKTFCVNGGECFMVKDLSNPSRYLCKCQPGFTGARCT). 3 cysteine pairs are disulfide-bonded: C182–C196, C190–C210, and C212–C221. The helical transmembrane segment at 243–265 (VLTITGICIALLVVGIMCVVAYC) threads the bilayer. The Cytoplasmic portion of the chain corresponds to 266 to 640 (KTKKQRKKLH…VIANQDPIAV (375 aa)). The segment covering 334–350 (TSHYTSTAHHSTTVTQT) has biased composition (low complexity). Disordered stretches follow at residues 334-360 (TSHY…NGHT), 375-399 (SVEN…GGPR), 433-461 (RMSP…SMTV), and 524-588 (EYET…DTPF). Positions 351–360 (PSHSWSNGHT) are enriched in polar residues. Gly residues predominate over residues 387-397 (GPRGRLNGTGG). The span at 542–552 (ANSRRAKRTKP) shows a compositional bias: basic residues. Over residues 563 to 574 (DSNTSSQSSNSE) the composition is skewed to low complexity.

Belongs to the neuregulin family. As to quaternary structure, the cytoplasmic domain interacts with the LIM domain region of LIMK1. Forms a ternary complex with ERBB3 and ITGAV:ITGB3 or ITGA6:ITGB4. Interacts with NRDC and BACE1. Post-translationally, proteolytic cleavage close to the plasma membrane on the external face leads to the release of the soluble growth factor form. N- and O-glycosylated. Extensive glycosylation precedes the proteolytic cleavage. Type I isoforms are the predominant forms expressed in the endocardium. Isoform alpha is expressed in breast, ovary, testis, prostate, heart, skeletal muscle, lung, placenta liver, kidney, salivary gland, small intestine and brain, but not in uterus, stomach, pancreas, and spleen. Isoform 3 is the predominant form in mesenchymal cells and in non-neuronal organs, whereas isoform 6 is the major neuronal form. Isoform 8 is expressed in spinal cord and brain. Isoform 9 is the major form in skeletal muscle cells; in the nervous system it is expressed in spinal cord and brain. Also detected in adult heart, placenta, lung, liver, kidney, and pancreas. Isoform 10 is expressed in nervous system: spinal cord motor neurons, dorsal root ganglion neurons, and brain. Predominant isoform expressed in sensory and motor neurons. Not detected in adult heart, placenta, lung, liver, skeletal muscle, kidney, and pancreas. Not expressed in fetal lung, liver and kidney. Type IV isoforms are brain-specific.

Its subcellular location is the cell membrane. The protein localises to the secreted. The protein resides in the nucleus. It localises to the membrane. Its function is as follows. Direct ligand for ERBB3 and ERBB4 tyrosine kinase receptors. Concomitantly recruits ERBB1 and ERBB2 coreceptors, resulting in ligand-stimulated tyrosine phosphorylation and activation of the ERBB receptors. The multiple isoforms perform diverse functions such as inducing growth and differentiation of epithelial, glial, neuronal, and skeletal muscle cells; inducing expression of acetylcholine receptor in synaptic vesicles during the formation of the neuromuscular junction; stimulating lobuloalveolar budding and milk production in the mammary gland and inducing differentiation of mammary tumor cells; stimulating Schwann cell proliferation; implication in the development of the myocardium such as trabeculation of the developing heart. Isoform 10 may play a role in motor and sensory neuron development. Binds to ERBB4. Binds to ERBB3. Acts as a ligand for integrins and binds (via EGF domain) to integrins ITGAV:ITGB3 or ITGA6:ITGB4. Its binding to integrins and subsequent ternary complex formation with integrins and ERRB3 are essential for NRG1-ERBB signaling. Induces the phosphorylation and activation of MAPK3/ERK1, MAPK1/ERK2 and AKT1. Ligand-dependent ERBB4 endocytosis is essential for the NRG1-mediated activation of these kinases in neurons. The sequence is that of Pro-neuregulin-1, membrane-bound isoform (NRG1) from Homo sapiens (Human).